Reading from the N-terminus, the 218-residue chain is Synaptonemal complex central element protein 2 (218 aa).

Residues 1 to 32 show a composition bias toward basic and acidic residues; it reads MERQGVDVPHVKCKDQEPQPLGESKEHPRWEE. The segment at 1–42 is disordered; that stretch reads MERQGVDVPHVKCKDQEPQPLGESKEHPRWEENCEEEAGGGP. Residues 61–87 are a coiled coil; it reads SSLDSSIDILQKRAQELIENINKSRQK. Residues 171–218 are disordered; that stretch reads RWGPDHSRGKSPPRPGNSQPPDVFVSSVAETTSQATASEVQTNRDGEC. Residues 198–211 are compositionally biased toward polar residues; sequence VAETTSQATASEVQ.

This sequence belongs to the SYCE family. As to quaternary structure, homodimer. Found in a complex with SYCP1 and SYCE1. Interacts with SYCP1, SYCE1 and SYCE3. Interacts with TEX12.

It is found in the nucleus. The protein localises to the chromosome. Its function is as follows. Major component of the transverse central element of synaptonemal complexes (SCS), formed between homologous chromosomes during meiotic prophase. Requires SYCP1 in order to be incorporated into the central element. May have a role in the synaptonemal complex assembly, stabilization and recombination. The polypeptide is Synaptonemal complex central element protein 2 (SYCE2) (Homo sapiens (Human)).